A 111-amino-acid chain; its full sequence is MSSHQNFLTPPPDHSKAILAVAVGVGLAIVLHFSLSYKLPSPGDNIHSLPFGGTYRDGTKSIIYNSPHRGPGQSGALPIITVFAIIECTLHVLRKRDNPVRPQHSDCPNCS.

Residues 1 to 16 are Cytoplasmic-facing; it reads MSSHQNFLTPPPDHSK. A helical transmembrane segment spans residues 17-37; it reads AILAVAVGVGLAIVLHFSLSY. At 38 to 72 the chain is on the lumenal side; it reads KLPSPGDNIHSLPFGGTYRDGTKSIIYNSPHRGPG. A helical membrane pass occupies residues 73–93; sequence QSGALPIITVFAIIECTLHVL. Residues 94-111 are Cytoplasmic-facing; it reads RKRDNPVRPQHSDCPNCS.

The protein belongs to the Tymovirales TGBp2 protein family.

It localises to the host endoplasmic reticulum membrane. Functionally, plays a role in viral cell-to-cell propagation, by facilitating genome transport to neighboring plant cells through plasmosdesmata,. In Carica papaya (Papaya), this protein is Movement protein TGB2.